The chain runs to 294 residues: NAD kinase (294 aa).

Asp74 serves as the catalytic Proton acceptor. NAD(+) is bound by residues 74–75 (DG), Arg79, 149–150 (NE), Asp179, 190–195 (TGYSMS), and Ala214.

The protein belongs to the NAD kinase family. It depends on a divalent metal cation as a cofactor.

Its subcellular location is the cytoplasm. It carries out the reaction NAD(+) + ATP = ADP + NADP(+) + H(+). In terms of biological role, involved in the regulation of the intracellular balance of NAD and NADP, and is a key enzyme in the biosynthesis of NADP. Catalyzes specifically the phosphorylation on 2'-hydroxyl of the adenosine moiety of NAD to yield NADP. This Flavobacterium psychrophilum (strain ATCC 49511 / DSM 21280 / CIP 103535 / JIP02/86) protein is NAD kinase.